The following is a 442-amino-acid chain: D-serine dehydratase (442 aa).

Position 118 is an N6-(pyridoxal phosphate)lysine (Lys-118).

It belongs to the serine/threonine dehydratase family. DsdA subfamily. In terms of assembly, monomer. The cofactor is pyridoxal 5'-phosphate.

It catalyses the reaction D-serine = pyruvate + NH4(+). This chain is D-serine dehydratase, found in Escherichia coli O81 (strain ED1a).